We begin with the raw amino-acid sequence, 162 residues long: MNPVRKKRLIIVLAILVGVGAAVGLALSALQQNINLFYTPTQIANGEAPTDTRIRAGGLVEKGSLQRSADSLNVRFVVTDGAKEVTIAYHGILPDLFREGQGIVALGKLGGDGVLVADEVLAKHDENYMPPEVTKALKDSGQLKHYENGKAAGETSYNQEGK.

The Cytoplasmic segment spans residues 1–8 (MNPVRKKR). Residues 9–29 (LIIVLAILVGVGAAVGLALSA) form a helical; Signal-anchor for type II membrane protein membrane-spanning segment. The Periplasmic segment spans residues 30-162 (LQQNINLFYT…GETSYNQEGK (133 aa)). The heme site is built by His-124 and Tyr-128. The segment covering 139–148 (DSGQLKHYEN) has biased composition (basic and acidic residues). Positions 139-162 (DSGQLKHYENGKAAGETSYNQEGK) are disordered.

This sequence belongs to the CcmE/CycJ family.

It localises to the cell inner membrane. Its function is as follows. Heme chaperone required for the biogenesis of c-type cytochromes. Transiently binds heme delivered by CcmC and transfers the heme to apo-cytochromes in a process facilitated by CcmF and CcmH. The sequence is that of Cytochrome c-type biogenesis protein CcmE from Pseudomonas paraeruginosa (strain DSM 24068 / PA7) (Pseudomonas aeruginosa (strain PA7)).